Reading from the N-terminus, the 331-residue chain is DNA-directed RNA polymerase subunit alpha (331 aa).

The interval 1–225 is alpha N-terminal domain (alpha-NTD); it reads MLDIAMPKLE…QYSSIIADFN (225 aa). The tract at residues 243-331 is alpha C-terminal domain (alpha-CTD); it reads PSEIYDMPIE…AARLNDGSAE (89 aa).

Belongs to the RNA polymerase alpha chain family. As to quaternary structure, homodimer. The RNAP catalytic core consists of 2 alpha, 1 beta, 1 beta' and 1 omega subunit. When a sigma factor is associated with the core the holoenzyme is formed, which can initiate transcription.

The enzyme catalyses RNA(n) + a ribonucleoside 5'-triphosphate = RNA(n+1) + diphosphate. Its function is as follows. DNA-dependent RNA polymerase catalyzes the transcription of DNA into RNA using the four ribonucleoside triphosphates as substrates. This chain is DNA-directed RNA polymerase subunit alpha, found in Herpetosiphon aurantiacus (strain ATCC 23779 / DSM 785 / 114-95).